A 588-amino-acid chain; its full sequence is Myc box-dependent-interacting protein 1 (588 aa).

Alanine 2 is modified (N-acetylalanine). An interaction with BIN2 region spans residues 2-122 (AEMGSKGVTA…DYHQKLVDQA (121 aa)). Coiled coils occupy residues 15–42 (ASNV…TKDE) and 193–274 (HLVA…EKQH). The 248-residue stretch at 29-276 (VLQKLGKADE…LVSLEKQHGS (248 aa)) folds into the BAR domain. Residues 279-355 (FTVKAQPSDS…PKHTPSKEMK (77 aa)) form a disordered region. Phosphoserine is present on residues serine 296, serine 298, and serine 304. Residue threonine 308 is modified to Phosphothreonine. A phosphoserine mark is found at serine 324 and serine 332. The segment at 379–422 (FEAPGPFSEQASLLDLDFEPLPPVASPVKAPTPSGQSIPWDLWE) is clathrin-binding. Positions 448–483 (PSQTAEPGPAQPAEASEVVGGTQEPGETAASEATSS) are disordered. Residues 474 to 483 (ETAASEATSS) are compositionally biased toward low complexity. Positions 515-588 (GFMFKVQAQH…FPENFTERVQ (74 aa)) constitute an SH3 domain.

Heterodimer with AMPH. Binds SH3GLB1. Interacts (via SH3 domain) with DNM1. Interacts with SYNJ1. Interacts (via SH3 domain) with DNM2. Interacts with CLTC. Interacts with AP2A2. Interacts with AP2B1. Interacts with MYC (via N-terminal transactivation domain); the interaction requires the integrity of the conserved MYC box regions 1 and 2. Interacts with BIN2. Interacts with SNX4. Interacts (via BAR domain) with BACE1. Binds (via BAR domain) F-actin. Phosphorylated by protein kinase C. Highly expressed in the brain and muscle. Isoform AMPH2-1 is expressed only in the brain where it is concentrated in axon initial segments and nodes of Ranvier. Isoform AMPH2-2 is widely expressed.

The protein resides in the nucleus. Its subcellular location is the cytoplasm. The protein localises to the endosome. It is found in the cell membrane. It localises to the sarcolemma. The protein resides in the T-tubule. In terms of biological role, is a key player in the control of plasma membrane curvature, and membrane shaping and remodeling. Required in muscle cells for the formation of T-tubules, tubular invaginations of the plasma membrane that function in depolarization-contraction coupling. Required in muscle cells for the formation of T-tubules, tubular invaginations of the plasma membrane that function in depolarization-contraction coupling. Is a negative regulator of endocytosis. Is also involved in the regulation of intracellular vesicles sorting, modulation of BACE1 trafficking and the control of amyloid-beta production. In neuronal circuits, endocytosis regulation may influence the internalization of PHF-tau aggregates. May be involved in the regulation of MYC activity and the control cell proliferation. The sequence is that of Myc box-dependent-interacting protein 1 (Bin1) from Rattus norvegicus (Rat).